Consider the following 457-residue polypeptide: 6-phosphofructo-2-kinase/fructose-2,6-bisphosphatase (457 aa).

Positions 1–20 (MEIPPGLETTKRKVAHSDEH) are disordered. Positions 1–244 (MEIPPGLETT…VYFLMNIHLL (244 aa)) are 6-phosphofructo-2-kinase. The span at 9–20 (TTKRKVAHSDEH) shows a compositional bias: basic and acidic residues. 36–44 (GLPARGKTY) contacts ATP. Residues R69 and R98 each coordinate beta-D-fructose 6-phosphate. D124 is an active-site residue. Positions 126 and 132 each coordinate beta-D-fructose 6-phosphate. The active site involves C154. 163–168 (NVTDVK) is a binding site for ATP. The beta-D-fructose 6-phosphate site is built by K168, R190, and Y194. The tract at residues 245–457 (PRSIYLTRHG…QLPLCDSPRD (213 aa)) is fructose-2,6-bisphosphatase. R252 lines the beta-D-fructose 2,6-bisphosphate pocket. Catalysis depends on H253, which acts as the Tele-phosphohistidine intermediate. Residues N259 and G265 each contribute to the beta-D-fructose 2,6-bisphosphate site. Catalysis depends on E324, which acts as the Proton donor/acceptor. Y335, R349, K353, Y364, Q390, and R394 together coordinate beta-D-fructose 2,6-bisphosphate. 346 to 349 (ADDR) lines the ATP pocket. Residues 390–394 (QAVLR) and Y426 each bind ATP.

This sequence in the C-terminal section; belongs to the phosphoglycerate mutase family.

It catalyses the reaction beta-D-fructose 2,6-bisphosphate + H2O = beta-D-fructose 6-phosphate + phosphate. The catalysed reaction is beta-D-fructose 6-phosphate + ATP = beta-D-fructose 2,6-bisphosphate + ADP + H(+). Functionally, synthesis and degradation of fructose 2,6-bisphosphate. The protein is 6-phosphofructo-2-kinase/fructose-2,6-bisphosphatase of Caenorhabditis elegans.